The following is a 132-amino-acid chain: ATP synthase epsilon chain, chloroplastic (132 aa).

This sequence belongs to the ATPase epsilon chain family. In terms of assembly, F-type ATPases have 2 components, CF(1) - the catalytic core - and CF(0) - the membrane proton channel. CF(1) has five subunits: alpha(3), beta(3), gamma(1), delta(1), epsilon(1). CF(0) has three main subunits: a, b and c.

It localises to the plastid. It is found in the chloroplast thylakoid membrane. Its function is as follows. Produces ATP from ADP in the presence of a proton gradient across the membrane. This chain is ATP synthase epsilon chain, chloroplastic, found in Pylaiella littoralis (Seaweed).